Here is a 353-residue protein sequence, read N- to C-terminus: Virulence plasmid protein pGP2-D (353 aa).

This chain is Virulence plasmid protein pGP2-D, found in Chlamydia muridarum (strain MoPn / Nigg).